We begin with the raw amino-acid sequence, 588 residues long: L-fucose isomerase (588 aa).

Residues Glu-335 and Asp-359 each act as proton acceptor in the active site. The Mn(2+) site is built by Glu-335, Asp-359, and His-525.

This sequence belongs to the L-fucose isomerase family. Mn(2+) is required as a cofactor.

It localises to the cytoplasm. It carries out the reaction L-fucose = L-fuculose. The protein operates within carbohydrate degradation; L-fucose degradation; L-lactaldehyde and glycerone phosphate from L-fucose: step 1/3. Its function is as follows. Converts the aldose L-fucose into the corresponding ketose L-fuculose. The polypeptide is L-fucose isomerase (Streptococcus pneumoniae (strain Hungary19A-6)).